The following is a 250-amino-acid chain: NADH-quinone oxidoreductase subunit C (250 aa).

It belongs to the complex I 30 kDa subunit family. NDH-1 is composed of 14 different subunits. Subunits NuoB, C, D, E, F, and G constitute the peripheral sector of the complex.

Its subcellular location is the cell inner membrane. The catalysed reaction is a quinone + NADH + 5 H(+)(in) = a quinol + NAD(+) + 4 H(+)(out). Its function is as follows. NDH-1 shuttles electrons from NADH, via FMN and iron-sulfur (Fe-S) centers, to quinones in the respiratory chain. The immediate electron acceptor for the enzyme in this species is believed to be ubiquinone. Couples the redox reaction to proton translocation (for every two electrons transferred, four hydrogen ions are translocated across the cytoplasmic membrane), and thus conserves the redox energy in a proton gradient. The chain is NADH-quinone oxidoreductase subunit C from Xanthomonas campestris pv. campestris (strain 8004).